A 123-amino-acid polypeptide reads, in one-letter code: Large ribosomal subunit protein uL14 (123 aa).

This sequence belongs to the universal ribosomal protein uL14 family. As to quaternary structure, part of the 50S ribosomal subunit. Forms a cluster with proteins L3 and L19. In the 70S ribosome, L14 and L19 interact and together make contacts with the 16S rRNA in bridges B5 and B8.

Functionally, binds to 23S rRNA. Forms part of two intersubunit bridges in the 70S ribosome. In Tropheryma whipplei (strain TW08/27) (Whipple's bacillus), this protein is Large ribosomal subunit protein uL14.